The following is a 262-amino-acid chain: Abhydrolase domain-containing protein ACTT2-1 (262 aa).

The short motif at 260–262 is the Peroxisomal targeting signal type 1 element; the sequence is SKL.

Belongs to the AB hydrolase superfamily. AKT2 hydrolase family.

Its subcellular location is the peroxisome. Its pathway is mycotoxin biosynthesis. Abhydrolase domain-containing protein; part of the gene clusters that mediate the biosynthesis of the host-selective toxins (HSTs) ACT-toxins responsible for brown spot of tangerine disease by the tangerine pathotype which affects tangerines and mandarins. ACT-toxins consist of three moieties, 9,10-epoxy-8-hydroxy-9-methyl-decatrienoic acid (EDA), valine and a polyketide. ACT-toxin I is toxic to both citrus and pear; toxin II the 5''-deoxy derivative of ACT-toxin I, is highly toxic to pear and slightly toxic to citrus. On cellular level, ACT-toxins affect plasma membrane of susceptible cells and cause a sudden increase in loss of K(+) after a few minutes of toxin treatment. The acyl-CoA ligase ACTT1, the hydrolase ACTT2, the enoyl-CoA hydratases ACTT3 and ACTT6, and the acyl-CoA synthetase ACTT5 are all involved in the biosynthesis of the AK-, AF- and ACT-toxin common 9,10-epoxy-8-hydroxy-9-methyl-decatrienoic acid (EDA) structural moiety. The exact role of each enzyme, and of additional enzymes identified within the AF-toxin clusters have still to be determined. On the other hand, ACTTS1 to ACTTS4 are specific to the tangerine pathotype. The function of ACTTS3 is to elongate the polyketide chain portion of ACT-toxin that is unique to this toxin. The enoyl-reductase ACTTS2 might complement the missing enoyl-reductase (ER) domain in ACTTS3 in the synthesis of the polyketide portion of ACT-toxin. The roles of the nonribosomal peptide synthetases-related proteins ACTTS1 and ACTTS4 have also still not been elucidated. The polypeptide is Abhydrolase domain-containing protein ACTT2-1 (Alternaria alternata (Alternaria rot fungus)).